We begin with the raw amino-acid sequence, 247 residues long: Probable transcriptional regulatory protein GSU1074 (247 aa).

The protein belongs to the TACO1 family.

Its subcellular location is the cytoplasm. This Geobacter sulfurreducens (strain ATCC 51573 / DSM 12127 / PCA) protein is Probable transcriptional regulatory protein GSU1074.